The primary structure comprises 314 residues: Secreted frizzled-related protein 1 (314 aa).

The signal sequence occupies residues 1 to 31 (MGIGRSEGGRRGAALGVLLALGAALLAVGSA). The FZ domain maps to 53-169 (TKPPQCVDIP…FPEGDVCIAM (117 aa)). 5 disulfides stabilise this stretch: C58–C121, C68–C114, C105–C140, C129–C166, and C133–C157. N173 carries N-linked (GlcNAc...) asparagine glycosylation. Intrachain disulfides connect C186–C256, C189–C258, and C203–C306. Positions 186–306 (CPPCDNELKS…FMKKMKNHEC (121 aa)) constitute an NTR domain.

It belongs to the secreted frizzled-related protein (sFRP) family. In terms of assembly, interacts with WNT1, WNT2 and FRZD6. Interacts with WNT4, WNT8 and MYOC. Widely expressed. Absent from lung, liver and peripheral blood leukocytes. Highest levels in heart and fetal kidney. Also expressed in testis, ovary, fetal brain and lung, leiomyomal cells, myometrial cells and vascular smooth muscle cells. Expressed in foreskin fibroblasts and in keratinocytes.

It is found in the secreted. In terms of biological role, soluble frizzled-related proteins (sFRPS) function as modulators of Wnt signaling through direct interaction with Wnts. They have a role in regulating cell growth and differentiation in specific cell types. SFRP1 decreases intracellular beta-catenin levels. Has antiproliferative effects on vascular cells, in vitro and in vivo, and can induce, in vivo, an angiogenic response. In vascular cell cycle, delays the G1 phase and entry into the S phase. In kidney development, inhibits tubule formation and bud growth in metanephroi. Inhibits WNT1/WNT4-mediated TCF-dependent transcription. The protein is Secreted frizzled-related protein 1 (SFRP1) of Homo sapiens (Human).